Here is a 145-residue protein sequence, read N- to C-terminus: Large ribosomal subunit protein uL11 (145 aa).

This sequence belongs to the universal ribosomal protein uL11 family. In terms of assembly, part of the ribosomal stalk of the 50S ribosomal subunit. Interacts with L10 and the large rRNA to form the base of the stalk. L10 forms an elongated spine to which L12 dimers bind in a sequential fashion forming a multimeric L10(L12)X complex. Post-translationally, one or more lysine residues are methylated.

Functionally, forms part of the ribosomal stalk which helps the ribosome interact with GTP-bound translation factors. The polypeptide is Large ribosomal subunit protein uL11 (Flavobacterium johnsoniae (strain ATCC 17061 / DSM 2064 / JCM 8514 / BCRC 14874 / CCUG 350202 / NBRC 14942 / NCIMB 11054 / UW101) (Cytophaga johnsonae)).